The sequence spans 247 residues: Coproheme decarboxylase (247 aa).

Residues R129, Y143–K147, H170, Q183, and S221 contribute to the Fe-coproporphyrin III site. The active site involves Y143.

Belongs to the ChdC family. Type 1 subfamily. Requires Fe-coproporphyrin III as cofactor.

The enzyme catalyses Fe-coproporphyrin III + 2 H2O2 + 2 H(+) = heme b + 2 CO2 + 4 H2O. The catalysed reaction is Fe-coproporphyrin III + H2O2 + H(+) = harderoheme III + CO2 + 2 H2O. It carries out the reaction harderoheme III + H2O2 + H(+) = heme b + CO2 + 2 H2O. It functions in the pathway porphyrin-containing compound metabolism; protoheme biosynthesis. Functionally, involved in coproporphyrin-dependent heme b biosynthesis. Catalyzes the decarboxylation of Fe-coproporphyrin III (coproheme) to heme b (protoheme IX), the last step of the pathway. The reaction occurs in a stepwise manner with a three-propionate intermediate. The protein is Coproheme decarboxylase of Bacillus cereus (strain AH820).